The primary structure comprises 1914 residues: Fatty acid synthase beta subunit stcK (1914 aa).

The acetyltransferase (AT) domain stretch occupies residues 17–395; sequence LYACFGGQGP…LEGTGMNVVN (379 aa). An enoyl reductase (ER) domain region spans residues 446 to 692; the sequence is TRLLGTPHVM…LIVEAPGVKD (247 aa). A dehydratase (DH) domain region spans residues 1009–1509; sequence GECAWGYAAL…RANDRLRMEI (501 aa). The MaoC-like domain maps to 1398-1532; sequence FLNRHGAPRV…VRVLKESTGE (135 aa). Residues 1548-1900 are malonyl/palmitoyl transferase (MT/PT) domain; that stretch reads YVFTGQGTQE…IRLVQGVTQS (353 aa).

It belongs to the fungal fatty acid synthetase subunit beta family. As to quaternary structure, [Alpha(6)beta(6)] hexamers of two multifunctional subunits (alpha and beta).

It carries out the reaction acetyl-CoA + n malonyl-CoA + 2n NADPH + 4n H(+) = a long-chain-acyl-CoA + n CoA + n CO2 + 2n NADP(+).. It catalyses the reaction holo-[ACP] + acetyl-CoA = acetyl-[ACP] + CoA. The catalysed reaction is holo-[ACP] + malonyl-CoA = malonyl-[ACP] + CoA. The enzyme catalyses a (3R)-hydroxyacyl-[ACP] = a (2E)-enoyl-[ACP] + H2O. It carries out the reaction a 2,3-saturated acyl-[ACP] + NAD(+) = a (2E)-enoyl-[ACP] + NADH + H(+). It catalyses the reaction (9Z)-octadecenoyl-[ACP] + H2O = (9Z)-octadecenoate + holo-[ACP] + H(+). The protein operates within mycotoxin biosynthesis; sterigmatocystin biosynthesis. Fatty acid synthase beta subunit; part of the gene cluster that mediates the biosynthesis of sterigmatocystin (ST), a polyketide-derived furanocoumarin which is part of the most toxic and carcinogenic compounds among the known mycotoxins. The first step in the biosynthesis of sterigmatocystin is the production of hexanoate by the fatty acid synthase (FAS) units stcJ and stcK. The polyketide backbone is assembled by the non-reducing polyketide synthase stcA by condensation of the starter hexanoyl-CoA and 7 malonyl-CoA extender units followed by cyclization and release of norsolorinic acid. Norsolorinic acid is the first stable intermediate in the biosynthesis of sterigmatocystin and is converted into averantin (AVN) by the ketoreductase stcE which reduces the hexanoate ketone to an alcohol. Averantin is then oxidized into 5'-hydroxyaverantin (HAVN) by the cytochrome P450 monooxygenase stcF. 5'-hydroxyaverantin is further converted to 5'-oxyaverantin (OAVN) by the 5'-hydroxyaverantin dehydrogenase stcG. The next step is the conversion of OAVN into averufin (AVF) which is catalyzed by a yet to be identified enzyme. The cytochrome P450 monooxygenase stcB and the flavin-binding monooxygenase stcW are both required for the conversion of averufin to 1-hydroxyversicolorone. The esterase stcI probably catalyzes the formation of versiconal hemiacetal acetate from 1-hydroxyversicolorone. The oxydoreductase stcN then probably catalyzes the biosynthetic step from versiconal to versicolorin B (VERB). The next step is performed by the versicolorin B desaturase stcL to produce versicolorin A (VERA). The ketoreductase stcU and the cytochrome P450 monooxygenase stcS are involved in the conversion of versicolorin A to demethylsterigmatocystin. The Baeyer-Villiger oxidas stcQ and the reductase stcR might be involved in the biosynthetic step from versicolorin A to demethylsterigmatocystin. The final step in the biosynthesis of sterigmatocystin is the methylation of demethylsterigmatocystin catalyzed by the methyltransferase stcP. The protein is Fatty acid synthase beta subunit stcK of Emericella nidulans (strain FGSC A4 / ATCC 38163 / CBS 112.46 / NRRL 194 / M139) (Aspergillus nidulans).